Consider the following 231-residue polypeptide: uncharacterized protein (231 aa).

This is an uncharacterized protein from Mycobacterium tuberculosis (strain ATCC 25618 / H37Rv).